Here is a 431-residue protein sequence, read N- to C-terminus: MTDQPETFRRRIFSRSSWPEWQRVSELLRTETVGGALLLVAALAALVWANSPWSAGYDQVSDFVVGPHSLHLDLSISAWAADGLLAIFFFVVGVELKREFVVGDLRDPAKAALPIAAAVGGMIVPAVIFVGVNLVAGHTENLGGWAIPVATDIAFALAVLAVIATHLPSALRIFLLTLAVVDDLLAIIVIAVFYTTQLSFGPLAGALVTIAVFGLAVQRGVRTPFLLLPLAVVAWALMHASGVHATVAGVLLGFTIPVLGRHACADRMEHRLRPLSAGFAVPVFAFFAAGVTVGGLSGFASALSHPVTYGVIAGLVLGKPIGVFLTTYVLARFTNASLDEDLAWRDVLGLALLAGIGFTVSLLIGELAFENSPIAHDDAKIAVLTGSVLAGLLAAVVLLSRNAVYRRIHEAETVDADDDGVPDIYQPRQDQ.

The next 11 membrane-spanning stretches (helical) occupy residues 33-53, 74-94, 112-132, 144-164, 173-193, 197-217, 225-245, 279-299, 311-331, 347-367, and 379-399; these read VGGA…NSPW, LSIS…VVGV, ALPI…FVGV, GWAI…AVIA, IFLL…IAVF, QLSF…GLAV, FLLL…GVHA, FAVP…LSGF, VIAG…YVLA, VLGL…IGEL, and AKIA…VVLL.

This sequence belongs to the NhaA Na(+)/H(+) (TC 2.A.33) antiporter family.

Its subcellular location is the cell membrane. It carries out the reaction Na(+)(in) + 2 H(+)(out) = Na(+)(out) + 2 H(+)(in). Functionally, na(+)/H(+) antiporter that extrudes sodium in exchange for external protons. The polypeptide is Na(+)/H(+) antiporter NhaA (Mycolicibacterium smegmatis (strain ATCC 700084 / mc(2)155) (Mycobacterium smegmatis)).